The chain runs to 252 residues: Probable transcriptional regulatory protein Kole_1935 (252 aa).

Belongs to the TACO1 family.

It localises to the cytoplasm. The protein is Probable transcriptional regulatory protein Kole_1935 of Kosmotoga olearia (strain ATCC BAA-1733 / DSM 21960 / TBF 19.5.1).